A 303-amino-acid chain; its full sequence is Digeranylgeranylglyceryl phosphate synthase (303 aa).

Transmembrane regions (helical) follow at residues 23–43 (VLGV…AAIA), 88–108 (LALA…PLTG), 130–150 (LPGN…GSLA), 164–184 (TIPI…VKGV), 206–228 (FALR…AAPL), 232–254 (GYAF…AACL), and 272–292 (VAMF…PVFY).

Belongs to the UbiA prenyltransferase family. DGGGP synthase subfamily. Mg(2+) is required as a cofactor.

It is found in the cell membrane. The catalysed reaction is sn-3-O-(geranylgeranyl)glycerol 1-phosphate + (2E,6E,10E)-geranylgeranyl diphosphate = 2,3-bis-O-(geranylgeranyl)-sn-glycerol 1-phosphate + diphosphate. Its pathway is membrane lipid metabolism; glycerophospholipid metabolism. Its function is as follows. Prenyltransferase that catalyzes the transfer of the geranylgeranyl moiety of geranylgeranyl diphosphate (GGPP) to the C2 hydroxyl of (S)-3-O-geranylgeranylglyceryl phosphate (GGGP). This reaction is the second ether-bond-formation step in the biosynthesis of archaeal membrane lipids. The protein is Digeranylgeranylglyceryl phosphate synthase of Ignicoccus hospitalis (strain KIN4/I / DSM 18386 / JCM 14125).